A 166-amino-acid polypeptide reads, in one-letter code: Phosphopantetheine adenylyltransferase (166 aa).

Residue S11 participates in substrate binding. Residues 11–12 and H19 each bind ATP; that span reads SF. Residues K43, V80, and R94 each contribute to the substrate site. ATP contacts are provided by residues 95–97, E105, and 130–136; these read GLR and VRTITAT.

Belongs to the bacterial CoaD family. As to quaternary structure, homohexamer. Mg(2+) serves as cofactor.

The protein resides in the cytoplasm. It carries out the reaction (R)-4'-phosphopantetheine + ATP + H(+) = 3'-dephospho-CoA + diphosphate. It participates in cofactor biosynthesis; coenzyme A biosynthesis; CoA from (R)-pantothenate: step 4/5. Its function is as follows. Reversibly transfers an adenylyl group from ATP to 4'-phosphopantetheine, yielding dephospho-CoA (dPCoA) and pyrophosphate. The chain is Phosphopantetheine adenylyltransferase from Mesorhizobium japonicum (strain LMG 29417 / CECT 9101 / MAFF 303099) (Mesorhizobium loti (strain MAFF 303099)).